Consider the following 95-residue polypeptide: Large ribosomal subunit protein bL25 (95 aa).

Belongs to the bacterial ribosomal protein bL25 family. In terms of assembly, part of the 50S ribosomal subunit; part of the 5S rRNA/L5/L18/L25 subcomplex. Contacts the 5S rRNA. Binds to the 5S rRNA independently of L5 and L18.

In terms of biological role, this is one of the proteins that binds to the 5S RNA in the ribosome where it forms part of the central protuberance. In Chromobacterium violaceum (strain ATCC 12472 / DSM 30191 / JCM 1249 / CCUG 213 / NBRC 12614 / NCIMB 9131 / NCTC 9757 / MK), this protein is Large ribosomal subunit protein bL25.